Here is a 266-residue protein sequence, read N- to C-terminus: N-acetyltransferase ECO1 (266 aa).

The CCHH-type zinc-finger motif lies at 31 to 55 (KKCTECQMSYIIDSPADCAEHKKYH). Positions 108 to 266 (TPGKTAEVKA…SGELLIPCYI (159 aa)) constitute an N-acetyltransferase domain.

The protein belongs to the acetyltransferase family. ECO subfamily.

Its subcellular location is the nucleus. Functionally, probable acetyltransferase required for the establishment of sister chromatid cohesion and couple the processes of cohesion and DNA replication to ensure that only sister chromatids become paired together. In contrast to the structural cohesins, the deposition and establishment factors are required only during S phase. Acts by acetylating the cohesin complex component SMC3. This Eremothecium gossypii (strain ATCC 10895 / CBS 109.51 / FGSC 9923 / NRRL Y-1056) (Yeast) protein is N-acetyltransferase ECO1 (ECO1).